The following is a 417-amino-acid chain: Tol-Pal system protein TolB (417 aa).

Positions 1–16 are cleaved as a signal peptide; the sequence is MRYLWLFLIGTIGLFA.

Belongs to the TolB family. The Tol-Pal system is composed of five core proteins: the inner membrane proteins TolA, TolQ and TolR, the periplasmic protein TolB and the outer membrane protein Pal. They form a network linking the inner and outer membranes and the peptidoglycan layer.

Its subcellular location is the periplasm. Its function is as follows. Part of the Tol-Pal system, which plays a role in outer membrane invagination during cell division and is important for maintaining outer membrane integrity. The chain is Tol-Pal system protein TolB from Helicobacter pylori (strain HPAG1).